The chain runs to 319 residues: Acetyl-coenzyme A carboxylase carboxyl transferase subunit alpha (319 aa).

Residues 32–293 (NVDIEVRALE…KAVLLNELEA (262 aa)) form the CoA carboxyltransferase C-terminal domain.

The protein belongs to the AccA family. In terms of assembly, acetyl-CoA carboxylase is a heterohexamer composed of biotin carboxyl carrier protein (AccB), biotin carboxylase (AccC) and two subunits each of ACCase subunit alpha (AccA) and ACCase subunit beta (AccD).

Its subcellular location is the cytoplasm. It catalyses the reaction N(6)-carboxybiotinyl-L-lysyl-[protein] + acetyl-CoA = N(6)-biotinyl-L-lysyl-[protein] + malonyl-CoA. It participates in lipid metabolism; malonyl-CoA biosynthesis; malonyl-CoA from acetyl-CoA: step 1/1. In terms of biological role, component of the acetyl coenzyme A carboxylase (ACC) complex. First, biotin carboxylase catalyzes the carboxylation of biotin on its carrier protein (BCCP) and then the CO(2) group is transferred by the carboxyltransferase to acetyl-CoA to form malonyl-CoA. The chain is Acetyl-coenzyme A carboxylase carboxyl transferase subunit alpha from Xylella fastidiosa (strain Temecula1 / ATCC 700964).